The sequence spans 120 residues: Large ribosomal subunit protein bL21 (120 aa).

This sequence belongs to the bacterial ribosomal protein bL21 family. In terms of assembly, part of the 50S ribosomal subunit. Contacts protein L20.

In terms of biological role, this protein binds to 23S rRNA in the presence of protein L20. The protein is Large ribosomal subunit protein bL21 of Roseiflexus castenholzii (strain DSM 13941 / HLO8).